Consider the following 664-residue polypeptide: Cyclic nucleotide-gated channel alpha-2 (664 aa).

Polar residues predominate over residues 1 to 10; the sequence is MMTEKSNGVK. A disordered region spans residues 1–61; that stretch reads MMTEKSNGVK…LQRLAEMDTP (61 aa). Over 1–146 the chain is Cytoplasmic; that stretch reads MMTEKSNGVK…PAGDWYYRWL (146 aa). The chain crosses the membrane as a helical span at residues 147-168; sequence FVIAMPVLYNWCLLVARACFSD. Over 169–178 the chain is Extracellular; that stretch reads LQRNYFVVWL. The chain crosses the membrane as a helical span at residues 179–199; it reads VLDYFSDTVYIADLIIRLRTG. Topologically, residues 200 to 224 are cytoplasmic; sequence FLEQGLLVKDPKKLRDNYIHTLQFK. The helical transmembrane segment at 225–243 threads the bilayer; sequence LDVASIIPTDLIYFAVGIH. Residues 244–248 are Extracellular-facing; that stretch reads SPEVR. A helical membrane pass occupies residues 249 to 267; that stretch reads FNRLLHFARMFEFFDRTET. Residues 268-274 are Cytoplasmic-facing; it reads RTSYPNI. Residues 272–380 are ion conduction pathway; that stretch reads PNIFRISNLV…GNVGSMISNM (109 aa). The chain crosses the membrane as a helical span at residues 275 to 298; it reads FRISNLVLYILVIIHWNACIYYAI. Residues 299–321 lie on the Extracellular side of the membrane; that stretch reads SKSIGFGVDTWVYPNITDPEYGY. 2 consecutive transmembrane segments (helical) span residues 322-356 and 357-381; these read LAREYIYCLYWSTLTLTTIGETPPPVKDEEYLFVI and FDFLIGVLIFATIVGNVGSMISNMN. The tract at residues 339–342 is selectivity filter; the sequence is TIGE. Residues 382 to 458 are C-linker; that stretch reads ATRAEFQAKI…STLKKVRIFQ (77 aa). Topologically, residues 382-664 are cytoplasmic; the sequence is ATRAEFQAKI…INTPEPAVAE (283 aa). Positions 462–582 are cyclic nucleotide-binding domain; that stretch reads AGLLVELVLK…EERGREILMK (121 aa). G522, S525, R538, and T539 together coordinate 3',5'-cyclic GMP. 3',5'-cyclic AMP-binding residues include R538 and T539. A coiled-coil region spans residues 599-653; sequence VQEKLEQLETNMETLYTRFARLLAEYTGAQQKLKQRITVLETKMKQNHEDDYLSD.

It belongs to the cyclic nucleotide-gated cation channel (TC 1.A.1.5) family. CNGA2 subfamily. As to quaternary structure, the olfactory cyclic nucleotide-gated channel is an heterotetramer composed of CNGA2, CNGA4 and CNGB1b subunits with 2:1:1 stoichiometry.

Its subcellular location is the cell projection. It localises to the cilium membrane. The enzyme catalyses Ca(2+)(in) = Ca(2+)(out). The catalysed reaction is Na(+)(in) = Na(+)(out). It catalyses the reaction K(+)(in) = K(+)(out). It carries out the reaction NH4(+)(in) = NH4(+)(out). The enzyme catalyses Rb(+)(in) = Rb(+)(out). The catalysed reaction is Li(+)(in) = Li(+)(out). It catalyses the reaction Cs(+)(in) = Cs(+)(out). Pore-forming subunit of the olfactory cyclic nucleotide-gated channel. Operates in the cilia of olfactory sensory neurons where chemical stimulation of the odorant is converted to an electrical signal. Mediates odorant-induced cAMP-dependent Ca(2+) influx triggering neuron depolarization. The rise of intracellular Ca(2+) levels potentiates the olfactory response by activating Ca(2+)-dependent Cl(-) channels, but it also serves as a negative feedback signal to desensitize the channel for rapid adaptation to odorants. Conducts cAMP- and cGMP-gated ion currents, with permeability for monovalent and divalent cations. This chain is Cyclic nucleotide-gated channel alpha-2, found in Mus musculus (Mouse).